Consider the following 346-residue polypeptide: Inositol 2-dehydrogenase/D-chiro-inositol 3-dehydrogenase (346 aa).

Residues 322-331 (GREESIELPK) show a composition bias toward basic and acidic residues. Residues 322–346 (GREESIELPKKPAFYQHSAATPEQV) form a disordered region.

It belongs to the Gfo/Idh/MocA family. Homotetramer.

The catalysed reaction is myo-inositol + NAD(+) = scyllo-inosose + NADH + H(+). It catalyses the reaction 1D-chiro-inositol + NAD(+) = scyllo-inosine + NADH + H(+). Its pathway is polyol metabolism; myo-inositol degradation into acetyl-CoA; acetyl-CoA from myo-inositol: step 1/7. Its function is as follows. Involved in the oxidation of myo-inositol (MI) and D-chiro-inositol (DCI) to 2-keto-myo-inositol (2KMI or 2-inosose) and 1-keto-D-chiro-inositol (1KDCI), respectively. This Shouchella clausii (strain KSM-K16) (Alkalihalobacillus clausii) protein is Inositol 2-dehydrogenase/D-chiro-inositol 3-dehydrogenase.